The sequence spans 136 residues: Peptide methionine sulfoxide reductase MsrB (136 aa).

Residues 7–129 (SSSHENTLTE…NSASLSFTDD (123 aa)) form the MsrB domain. Residues C46, C49, C95, and C98 each contribute to the Zn(2+) site. Catalysis depends on C118, which acts as the Nucleophile.

The protein belongs to the MsrB Met sulfoxide reductase family. Zn(2+) is required as a cofactor.

The enzyme catalyses L-methionyl-[protein] + [thioredoxin]-disulfide + H2O = L-methionyl-(R)-S-oxide-[protein] + [thioredoxin]-dithiol. This Erwinia tasmaniensis (strain DSM 17950 / CFBP 7177 / CIP 109463 / NCPPB 4357 / Et1/99) protein is Peptide methionine sulfoxide reductase MsrB.